Here is a 304-residue protein sequence, read N- to C-terminus: Ribonuclease Z (304 aa).

Residues histidine 64, histidine 66, aspartate 68, histidine 69, histidine 141, aspartate 209, and histidine 267 each coordinate Zn(2+). Catalysis depends on aspartate 68, which acts as the Proton acceptor.

Belongs to the RNase Z family. Homodimer. It depends on Zn(2+) as a cofactor.

The catalysed reaction is Endonucleolytic cleavage of RNA, removing extra 3' nucleotides from tRNA precursor, generating 3' termini of tRNAs. A 3'-hydroxy group is left at the tRNA terminus and a 5'-phosphoryl group is left at the trailer molecule.. Its function is as follows. Zinc phosphodiesterase, which displays some tRNA 3'-processing endonuclease activity. Probably involved in tRNA maturation, by removing a 3'-trailer from precursor tRNA. This is Ribonuclease Z from Thermoplasma volcanium (strain ATCC 51530 / DSM 4299 / JCM 9571 / NBRC 15438 / GSS1).